We begin with the raw amino-acid sequence, 173 residues long: Shikimate kinase 1 (173 aa).

Residue 14–19 (GAGKST) coordinates ATP. Serine 18 contacts Mg(2+). Residues aspartate 36, arginine 60, and glycine 82 each contribute to the substrate site. Arginine 120 serves as a coordination point for ATP. Substrate is bound at residue arginine 140.

It belongs to the shikimate kinase family. As to quaternary structure, monomer. Requires Mg(2+) as cofactor.

Its subcellular location is the cytoplasm. The enzyme catalyses shikimate + ATP = 3-phosphoshikimate + ADP + H(+). It functions in the pathway metabolic intermediate biosynthesis; chorismate biosynthesis; chorismate from D-erythrose 4-phosphate and phosphoenolpyruvate: step 5/7. Functionally, catalyzes the specific phosphorylation of the 3-hydroxyl group of shikimic acid using ATP as a cosubstrate. In Hamiltonella defensa subsp. Acyrthosiphon pisum (strain 5AT), this protein is Shikimate kinase 1.